The sequence spans 175 residues: Disulfide bond formation protein B (175 aa).

Residues 1–13 lie on the Cytoplasmic side of the membrane; sequence MTALTRFAHSRSS. The chain crosses the membrane as a helical span at residues 14–30; the sequence is WFLLTGTAIGLEAAALY. At 31-48 the chain is on the periplasmic side; that stretch reads FQYVMKLDPCVMCIYQRL. Cysteines 40 and 43 form a disulfide. Residues 49–64 traverse the membrane as a helical segment; that stretch reads AVFGILVAGLIGMTAP. Residues 65–71 are Cytoplasmic-facing; that stretch reads KYRLIRI. The helical transmembrane segment at 72-89 threads the bilayer; that stretch reads LGASCWAVSATWGLKLAL. At 90-144 the chain is on the periplasmic side; the sequence is ALVNMQNNPSPFATCSFLPEFPTWMPLHEWFPAVMLPTGMCTDLPWRFMDVTMAE. An intrachain disulfide couples Cys104 to Cys130. Residues 145–163 traverse the membrane as a helical segment; the sequence is WMVVVFSTFLVIWLLFIVP. At 164–175 the chain is on the cytoplasmic side; it reads ILSGSTKPSLYK.

Belongs to the DsbB family.

Its subcellular location is the cell inner membrane. In terms of biological role, required for disulfide bond formation in some periplasmic proteins. Acts by oxidizing the DsbA protein. The polypeptide is Disulfide bond formation protein B (Shewanella sp. (strain W3-18-1)).